We begin with the raw amino-acid sequence, 366 residues long: 3-dehydroquinate synthase (366 aa).

NAD(+)-binding positions include 71 to 76 (DGEQYK), 105 to 109 (GVIGD), 129 to 130 (TT), Lys142, Lys151, and 169 to 172 (CLKT). The Zn(2+) site is built by Glu184, His247, and His264.

The protein belongs to the sugar phosphate cyclases superfamily. Dehydroquinate synthase family. Co(2+) is required as a cofactor. Zn(2+) serves as cofactor. Requires NAD(+) as cofactor.

The protein localises to the cytoplasm. The catalysed reaction is 7-phospho-2-dehydro-3-deoxy-D-arabino-heptonate = 3-dehydroquinate + phosphate. The protein operates within metabolic intermediate biosynthesis; chorismate biosynthesis; chorismate from D-erythrose 4-phosphate and phosphoenolpyruvate: step 2/7. In terms of biological role, catalyzes the conversion of 3-deoxy-D-arabino-heptulosonate 7-phosphate (DAHP) to dehydroquinate (DHQ). In Serratia proteamaculans (strain 568), this protein is 3-dehydroquinate synthase.